A 1191-amino-acid polypeptide reads, in one-letter code: Zinc finger protein ush (1191 aa).

Disordered stretches follow at residues 1–153 (MLSS…PKYP) and 169–194 (PDAK…DTQA). Residues 19–28 (VDSRDSKDLS) show a composition bias toward basic and acidic residues. A compositionally biased stretch (acidic residues) spans 61–73 (IDDDADEDAEFEE). A phosphoserine mark is found at S116 and S118. The segment covering 130–151 (ATPPSEPEASPCPSPSPCPTPK) has biased composition (pro residues). The CCHC FOG-type 1 zinc-finger motif lies at 202–235 (LLKPARFMCLPCGIAFSSPSTLEAHQAYYCSHRI). Positions 210, 213, 226, and 231 each coordinate Zn(2+). A disordered region spans residues 239 to 274 (DEAGSDKSGAGGSGATAGDAAGLTGGSTEPPAKMAR). Residues 254 to 266 (TAGDAAGLTGGST) are compositionally biased toward low complexity. A C2H2-type 1 zinc finger spans residues 279–301 (YGCTQCSYSADKKVSLNRHMRMH). The segment at 304-338 (SPAAPTLAGLPSLLQNGIAPPGVTPNPMEDSSSQQ) is disordered. The CCHC FOG-type 2 zinc-finger motif lies at 335–368 (SSQQTDRYCSHCDIRFNNIKTYRAHKQHYCSSRR). Residues C343, C346, H359, and C364 each contribute to the Zn(2+) site. Disordered regions lie at residues 361–413 (QHYC…ARNK), 504–540 (EPER…ESAP), and 601–635 (APSL…MSPP). Gly residues predominate over residues 383–394 (AGSGPGSAGGSI). 3 stretches are compositionally biased toward low complexity: residues 509-523 (SAPS…AKSS), 602-613 (PSLPSSPSMSPS), and 620-635 (SPRS…MSPP). CCHC FOG-type zinc fingers lie at residues 720–753 (YVKK…SARS) and 791–824 (PVAY…PKGG). C728, C731, H744, C749, C799, C802, H815, and C820 together coordinate Zn(2+). 3 consecutive C2H2-type zinc fingers follow at residues 882–907 (NKCP…HGTV), 910–932 (YRCS…IRTH), and 983–1006 (FNCD…KLMH). Residues 1011–1073 (INSPSISPDT…HENNNSPIAT (63 aa)) form a disordered region. A phosphoserine mark is found at S1013, S1015, and S1017. Residues 1025-1040 (VTSNPTTNQHSNSDVS) are compositionally biased toward polar residues. The segment at 1113–1146 (AAEVMKKYCSTCDISFNYVKTYLAHKQFYCKNKP) adopts a CCHC FOG-type 5 zinc-finger fold. Zn(2+) is bound by residues C1121, C1124, H1137, and C1142. S1156 carries the post-translational modification Phosphoserine.

It belongs to the FOG (Friend of GATA) family. As to quaternary structure, interacts with pnr, although weak this interaction is essential. Interacts with the isoform SrpNC of srp. Interacts with CtBP corepressor. First expressed in stage 5 at high levels in the primordium of the amnioserosa. Also expressed in germ band extending embryos in cells of the developing anterior and posterior midgut and in hemocyte precursors present in the cephalic mesoderm. In embryonic stage 8, it is expressed in blood cell precursors. By stage 10, it is expressed in hemocyte precursors that have spread throughout the lateral and ventral head mesoderm. By stage 11, it is expressed in the dorsal ectoderm and in precursor cells of the hemocytes and fat body. As embryogenesis proceeds, it is also expressed in stage 13 plasmatocytes migrating throughout the head mesoderm and down the ventral midline. By late embryogenesis, expression strongly decreases but remains in the dorsal ectoderm during dorsal closure, in cells within, or associated with, the central nervous system, and in plasmatocytes circulating throughout the embryonic hemolymph. During larval development, it is expressed in primary and secondary lobes of lymph glands. Expressed in the dorsal part of the thoracic imaginal disk.

It localises to the nucleus. Transcription regulator that modulates expression mediated by transcription factors of the GATA family such as pnr and srp. Represses transcription of proneural achaete-scute complex (AS-C), which is usually activated by pnr. Involved in cardiogenesis, blood, and eye development. During hematopoiesis, it is required to restrict the number of crystal cells, probably via its interaction with the isoform SrpNC of srp. Negatively regulates expression of sr. Probably acts by interacting with the GATA-type zinc finger of proteins such as pnr and srp, possibly antagonizing the interaction between the GATA-type zinc finger and some cofactor. The polypeptide is Zinc finger protein ush (ush) (Drosophila melanogaster (Fruit fly)).